We begin with the raw amino-acid sequence, 125 residues long: uncharacterized protein (125 aa).

Its subcellular location is the plastid. This is an uncharacterized protein from Euglena longa (Euglenophycean alga).